We begin with the raw amino-acid sequence, 387 residues long: MKKWMITIAMLILAGIALFVFISPLKSHKTVSQQDLRNPDFLDDKEVLLYFSSSADQDAFGGGKSYALFISHDGTLSSFQMKGLELGSAKVHGDSVMLEDKNTIYTIKNGLRSHKRTYQHTGDSAGFLQNTDGFYTLYNSGYDKKGDGYRSELYRQMDGEWKKDVIPYYIRASGFHDGAIYALVPTDDGKGYQLLQIQADQKKLTYLSITEWQYREGASVESQLAVDDQAVYVMVRGQKAHDLYQMVKINKKSGEVELHDIAEYKNDEQTIYSSMPFSFKNSFFPYDGNLYFIDGFGKVHKIDAKTGKTSIVFTLSPDKMKAEFKEITQKGSSLYFFTYTYHKPAYIEQYSLKTGKKMKEKEIGKVKDVVTPKSHLKLYDVEVMKRF.

Residues 1-27 (MKKWMITIAMLILAGIALFVFISPLKS) form the signal peptide.

This is an uncharacterized protein from Bacillus subtilis (strain 168).